We begin with the raw amino-acid sequence, 212 residues long: Glycerol-3-phosphate acyltransferase (212 aa).

A run of 4 helical transmembrane segments spans residues 3–23, 78–98, 115–135, and 155–177; these read ILLAALVAYLIGSVSFAVVVS, DVAVAWVAIAVFLGHLYPVFF, AVHPVLGLATALTWLIVAFFF, and FLFGTGHNPVAWAVLAMSVLLVW.

The protein belongs to the PlsY family. As to quaternary structure, probably interacts with PlsX.

The protein localises to the cell inner membrane. The catalysed reaction is an acyl phosphate + sn-glycerol 3-phosphate = a 1-acyl-sn-glycero-3-phosphate + phosphate. It participates in lipid metabolism; phospholipid metabolism. Functionally, catalyzes the transfer of an acyl group from acyl-phosphate (acyl-PO(4)) to glycerol-3-phosphate (G3P) to form lysophosphatidic acid (LPA). This enzyme utilizes acyl-phosphate as fatty acyl donor, but not acyl-CoA or acyl-ACP. In Burkholderia lata (strain ATCC 17760 / DSM 23089 / LMG 22485 / NCIMB 9086 / R18194 / 383), this protein is Glycerol-3-phosphate acyltransferase.